Reading from the N-terminus, the 516-residue chain is Maintenance of mitochondrial morphology protein 1 (516 aa).

Over 1–43 (MAGSTSASLQTPYFPSSTQINPVRVDHTLPLPPAQPSLSFTQG) the chain is Lumenal. A helical membrane pass occupies residues 44–64 (LLVGQLSVVLLIGAFIKFFIF). The Cytoplasmic portion of the chain corresponds to 65–516 (GEAPPPPSRG…GSMPDTVTET (452 aa)). Disordered regions lie at residues 70–118 (PPSR…SSST), 295–349 (TSDQ…SKHG), 420–466 (RTGL…IDRG), and 485–516 (GGHQ…VTET). Composition is skewed to polar residues over residues 74–96 (GLSN…TDSS), 105–118 (STSN…SSST), and 295–312 (TSDQ…TTSE). The region spanning 151–412 (QPESLDWFNV…EPRVQVVGLP (262 aa)) is the SMP-LTD domain. Positions 449-460 (GVSGGGGGGGSM) are enriched in gly residues.

It belongs to the MMM1 family. As to quaternary structure, homodimer. Component of the ER-mitochondria encounter structure (ERMES) or MDM complex, composed of MMM1, MDM10, MDM12 and MDM34. An MMM1 homodimer associates with one molecule of MDM12 on each side in a pairwise head-to-tail manner, and the SMP-LTD domains of MMM1 and MDM12 generate a continuous hydrophobic tunnel for phospholipid trafficking.

The protein localises to the endoplasmic reticulum membrane. Component of the ERMES/MDM complex, which serves as a molecular tether to connect the endoplasmic reticulum (ER) and mitochondria. Components of this complex are involved in the control of mitochondrial shape and protein biogenesis, and function in nonvesicular lipid trafficking between the ER and mitochondria. The MDM12-MMM1 subcomplex functions in the major beta-barrel assembly pathway that is responsible for biogenesis of all outer membrane beta-barrel proteins, and acts in a late step after the SAM complex. The MDM10-MDM12-MMM1 subcomplex further acts in the TOM40-specific pathway after the action of the MDM12-MMM1 complex. Essential for establishing and maintaining the structure of mitochondria and maintenance of mtDNA nucleoids. The polypeptide is Maintenance of mitochondrial morphology protein 1 (Paracoccidioides brasiliensis (strain Pb18)).